Reading from the N-terminus, the 341-residue chain is Cell division protein ZipA (341 aa).

Residues 1-6 (MENLQL) lie on the Periplasmic side of the membrane. A helical membrane pass occupies residues 7 to 27 (VLFVLGAIAIVAVLVHGFWSI). Topologically, residues 28 to 341 (RKQQPKSLKE…YLQRIRTQNS (314 aa)) are cytoplasmic. 2 disordered regions span residues 35–134 (LKES…PVLS) and 157–201 (QSSL…PEPE). A compositionally biased stretch (polar residues) spans 90 to 100 (TLTSEGQMDSS). Positions 175 to 190 (SIEVPEPVSEPVLESV) are enriched in low complexity. Over residues 192 to 201 (EPEPVAPEPE) the composition is skewed to pro residues.

Belongs to the ZipA family. In terms of assembly, interacts with FtsZ via their C-terminal domains.

It localises to the cell inner membrane. Functionally, essential cell division protein that stabilizes the FtsZ protofilaments by cross-linking them and that serves as a cytoplasmic membrane anchor for the Z ring. Also required for the recruitment to the septal ring of downstream cell division proteins. This is Cell division protein ZipA from Shewanella sediminis (strain HAW-EB3).